The chain runs to 1217 residues: MIDVNKFESMQIGLASPEKIRSWSYGEVKKPETINYRTLKPEREGLFCERIFGPTKDWECACGKYKRIRYKGIVCDRCGVEVTRSKVRRERMGHIELAAPVSHIWYFKGIPSRMGLVLDMSPRALEEVIYFASYVVIEPGDTTLEKKQLLTEREYREKREQYGQAFKAAMGAEAVKQLLDNVDLDGEVAQLKEELKTASGQKRTRAIRRLDILEAFRASGNQPSWMVMDVIPVIPPDLRPMVQLEGGRFATSDLNDLYRRVINRNNRLKRLLDLNAPSIIVQNEKRMLQEAVDALIDNGRRGRPVTGPGNRPLKSLSHMLKGKQGRFRQNLLGKRVDYSGRSVIVVGPFLKMYQCGLPKEMAIELFKPFVMRELVQREIATNIKNAKRKIERGEDEVWDILEEVIQEHPVLLNRAPTLHRLGIQAFEPVLVEGRAIRLHPLVCEAYNADFDGDQMAVHVPLNEEAQAEARMLMLAAQNILNPKDGKPVVTPSQDMVLGNYYLTMEEEGREGEGMIFRDMNEAVLAWQNGYVHLHSRIGVQTTLLGDKPFTDWQKERILITTVGKIIFNEIMPVEFPYLNEPTDYNLTVQTPDKYFVEAGTDIPAHIKEQELVLPFKKKNLGNIIAEVFKRFHITETSKMLDRMKDLGYKHSTYAGMTVGIADIMVLHEKQAIIDAAHKQVETITKQFRRGLITDDERYERVIGVWNGAKDEIQQKLIESMEARNPIFMMSDSGARGNISNFTQLAGMRGLMAAPNGRIMELPIISNFREGLSVLEMFISTHGARKGMTDTALKTADSGYLTRRLVDVAQDVIIREDDCGTDRGLEIEAIREGNEIIEPLDERLLGRYTRKSVVHPETGAIIIGADQLITEDLAREIVDAGIEKVTIRSVFTCNTKHGVCKHCYGRNLATGSDVEVGEAVGTIAAQSIGEPGTQLTMRTFHTGGVAGDDITQGLPRIQEIFEARNPKGQAVITEVTGEVIDISEDPATRQKEVTIKGKTDTRTYTVPYTARMKVAEGDIIHRGAPLTEGSIDPKQLLQVRDVLSVENYLLREVQRVYRMQGVEIGDKHIEVMVRQMLRKIRVMDPGDTEILPGTLMDIAEFKDRNYDTLVAGGVPATSRPVLLGITKASLETNSFLSAASFQETTRVLTDAAIRGKKDPLLGLKENVIIGKIIPAGTGMARYRNMEPKEVGVASENVYSISDIEAQMAAEDAMKNINK.

Zn(2+)-binding residues include cysteine 60, cysteine 62, cysteine 75, and cysteine 78. Residues aspartate 449, aspartate 451, and aspartate 453 each contribute to the Mg(2+) site. Residues cysteine 818, cysteine 892, cysteine 899, and cysteine 902 each coordinate Zn(2+).

It belongs to the RNA polymerase beta' chain family. The RNAP catalytic core consists of 2 alpha, 1 beta, 1 beta' and 1 omega subunit. When a sigma factor is associated with the core the holoenzyme is formed, which can initiate transcription. Mg(2+) serves as cofactor. Zn(2+) is required as a cofactor.

The catalysed reaction is RNA(n) + a ribonucleoside 5'-triphosphate = RNA(n+1) + diphosphate. In terms of biological role, DNA-dependent RNA polymerase catalyzes the transcription of DNA into RNA using the four ribonucleoside triphosphates as substrates. The polypeptide is DNA-directed RNA polymerase subunit beta' (Enterococcus faecalis (strain ATCC 700802 / V583)).